A 396-amino-acid polypeptide reads, in one-letter code: Elongation factor Tu 1 (396 aa).

One can recognise a tr-type G domain in the interval Lys10–Glu206. The interval Gly19–Thr26 is G1. A GTP-binding site is contributed by Gly19–Thr26. Thr26 lines the Mg(2+) pocket. Residues Gly60 to Ser64 are G2. The interval Asp81 to Gly84 is G3. GTP-binding positions include Asp81–His85 and Asn136–Asp139. The interval Asn136–Asp139 is G4. The tract at residues Ser174–Leu176 is G5.

Belongs to the TRAFAC class translation factor GTPase superfamily. Classic translation factor GTPase family. EF-Tu/EF-1A subfamily. In terms of assembly, monomer.

Its subcellular location is the cytoplasm. The catalysed reaction is GTP + H2O = GDP + phosphate + H(+). GTP hydrolase that promotes the GTP-dependent binding of aminoacyl-tRNA to the A-site of ribosomes during protein biosynthesis. This is Elongation factor Tu 1 from Rhodospirillum rubrum (strain ATCC 11170 / ATH 1.1.1 / DSM 467 / LMG 4362 / NCIMB 8255 / S1).